Consider the following 700-residue polypeptide: Beta-galactosidase BgaB (700 aa).

Arginine 122 and asparagine 160 together coordinate substrate. The active-site Proton donor is glutamate 161. The active-site Nucleophile is glutamate 320. Substrate is bound by residues tryptophan 328 and 368–371; that span reads EAFH.

Belongs to the glycosyl hydrolase 42 family. As to quaternary structure, trimer. Tetramer. The N-terminus is blocked.

It carries out the reaction Hydrolysis of terminal non-reducing beta-D-galactose residues in beta-D-galactosides.. Its activity is regulated as follows. Inhibited by high substrate concentrations (100 mg/ml). No effect on activity with various EDTA concentrations (0-1 mM). 20-fold higher activity when cells grown on TOS than when cells grown on galactose, glucose and lactose. In terms of biological role, involved in the hydrolysis of transgalactooligosaccharides (TOS). Highly active towards Gal(beta1-4)Gal and Gal(beta1-4)-Gal-containing oligosaccharides. Low activity towards Gal(beta1-3)Gal, lactose and Gal(beta1-3)GalOMe. No activity towards Gal(beta1-6)Gal, Gal(beta1-4)Man, Gal(alpha1-4)Gal, Gal(alpha1-3)Gal(beta1-4)Gal, lactulose, 3'fucosyllactose, lacto-N-fucopentaose I, lacto-N-fucopentaose II, cellobiose, maltose or sucrose. No transglycosylation activity is found at high substrate concentrations (100 mg/ml) and only low transglycosylation activity at lower substrate concentrations (10 mg/ml). The chain is Beta-galactosidase BgaB (bgaB) from Bifidobacterium adolescentis (strain ATCC 15703 / DSM 20083 / NCTC 11814 / E194a).